Reading from the N-terminus, the 186-residue chain is Peptidyl-tRNA hydrolase (186 aa).

Position 14 (Tyr-14) interacts with tRNA. Catalysis depends on His-19, which acts as the Proton acceptor. TRNA contacts are provided by Phe-64, Asn-66, and Asn-112.

It belongs to the PTH family. In terms of assembly, monomer.

The protein resides in the cytoplasm. The enzyme catalyses an N-acyl-L-alpha-aminoacyl-tRNA + H2O = an N-acyl-L-amino acid + a tRNA + H(+). Functionally, hydrolyzes ribosome-free peptidyl-tRNAs (with 1 or more amino acids incorporated), which drop off the ribosome during protein synthesis, or as a result of ribosome stalling. Catalyzes the release of premature peptidyl moieties from peptidyl-tRNA molecules trapped in stalled 50S ribosomal subunits, and thus maintains levels of free tRNAs and 50S ribosomes. The polypeptide is Peptidyl-tRNA hydrolase (Listeria monocytogenes serovar 1/2a (strain ATCC BAA-679 / EGD-e)).